Here is a 442-residue protein sequence, read N- to C-terminus: MTNTTTIDYSLDASWILPVVPHQRLFKDCSLLISRDRIHSIVPTSQSLRDYTVRERISLPGQLLMPGLINCHGHAAMTLLRGFADDMPLETWLKEHIWPVEAQWAGEEFVRDGGELAMAEMLLSGTTCFADMYFFGEALASAVHKAGMRAQLYFPIVDFATAWAQSPDEYIHKGLKLRDTYRSHPLINVHFGPHAPYTVGDAPLERIAVYADELHAQVHIHLHETPEEIESSIKEFGKRPLQRLADMGLLTPLTHCVHMTQTSAEDIALLANSGAHVIHCPRSNLKLASGSCPTAALTQQGVNVALGTDGAASNNSLDMFAELQAAALFGKLVAGDAAAIDAHSAIAMATINGAKAIGLEDQLGSLEPGKQADVIAIDMNDLDLQPVHNPVSQLVYTQMGHRVSNVWVAGEQLVKSRDLTTLSRKEIAANAAQWREKLGAKR.

Zn(2+) contacts are provided by His72 and His74. Residues Glu101 and His194 each contribute to the substrate site. Residue His221 coordinates Zn(2+). Positions 224 and 309 each coordinate substrate. Asp309 lines the Zn(2+) pocket.

The protein belongs to the metallo-dependent hydrolases superfamily. MTA/SAH deaminase family. Zn(2+) serves as cofactor.

It carries out the reaction S-adenosyl-L-homocysteine + H2O + H(+) = S-inosyl-L-homocysteine + NH4(+). It catalyses the reaction S-methyl-5'-thioadenosine + H2O + H(+) = S-methyl-5'-thioinosine + NH4(+). Catalyzes the deamination of 5-methylthioadenosine and S-adenosyl-L-homocysteine into 5-methylthioinosine and S-inosyl-L-homocysteine, respectively. Is also able to deaminate adenosine. The chain is 5-methylthioadenosine/S-adenosylhomocysteine deaminase from Teredinibacter turnerae (strain ATCC 39867 / T7901).